The chain runs to 1806 residues: Non-reducing polyketide synthase pks12 (1806 aa).

The 162-residue stretch at 30 to 191 (TDTMSGMISL…TKLHLRGKVH (162 aa)) folds into the Starter acyltransferase (SAT) domain. The region spanning 330-755 (ENAIAIVGAG…GSNSALICGE (426 aa)) is the Ketosynthase family 3 (KS3) domain. Active-site for beta-ketoacyl synthase activity residues include C504, H639, and H678. A malonyl-CoA:ACP transacylase (MAT) domain region spans residues 860 to 1156 (LAFSGQSKQT…HNPSQHTFLG (297 aa)). Residues 862–1147 (FSGQSKQTIG…IIPMVKRATH (286 aa)) form the Malonyl-CoA:ACP transacylase (MAT) domain. The active-site For acyl/malonyl transferase activity is the S947. The segment at 1249–1383 (PQTPPLKLVT…GRFSVTSHID (135 aa)) is N-terminal hotdog fold. Residues 1249–1558 (PQTPPLKLVT…FSRFPIAKLE (310 aa)) enclose the PKS/mFAS DH domain. Residues 1249 to 1558 (PQTPPLKLVT…FSRFPIAKLE (310 aa)) form a product template (PT) domain region. The Proton acceptor; for dehydratase activity role is filled by H1288. The interval 1404 to 1558 (SERLMAGRAY…FSRFPIAKLE (155 aa)) is C-terminal hotdog fold. Catalysis depends on D1468, which acts as the Proton donor; for dehydratase activity. The 78-residue stretch at 1727–1804 (QSKLRIRQRI…ELVDYVVISS (78 aa)) folds into the Carrier domain. At S1764 the chain carries O-(pantetheine 4'-phosphoryl)serine.

It depends on pantetheine 4'-phosphate as a cofactor.

It participates in secondary metabolite biosynthesis. Functionally, non-reducing polyketide synthase; part of the gene cluster that mediates the biosynthesis of mitorubrinol and mitorubrinic acid, two virulence factors that improve T.marneffei intracellular survival in macrophages. The two polyketide synthases pks12 and pks11 are probably responsible for sequential use in the biosynthesis of mitorubrinol and mitorubrinic acid. The first part of the biosynthesis is probably catalyzed by pks12, which synthesized orsellinic acid. This tetraketide is then used as a starter unit for pks11, which possesses a SAT domain, in the second part of the biosynthesis. Pks11, contains a methyltransferase domain, also served that methylates the products, using a methyl group from S-adenosylmethionine. The sequence is that of Non-reducing polyketide synthase pks12 from Talaromyces marneffei (Penicillium marneffei).